A 361-amino-acid chain; its full sequence is Phospho-N-acetylmuramoyl-pentapeptide-transferase (361 aa).

The next 10 membrane-spanning stretches (helical) occupy residues 25-45 (RGIL…PAVI), 73-93 (TMGG…WGDL), 98-118 (VWLV…DDWI), 139-159 (IFGL…AAIT), 168-188 (IALP…IVGF), 200-220 (GLAI…AYAS), 237-257 (AGEL…FLWF), 264-284 (VFMG…VAVI), 289-309 (LVLV…MIQV), and 339-359 (VIVR…ATLK).

The protein belongs to the glycosyltransferase 4 family. MraY subfamily. Mg(2+) serves as cofactor.

Its subcellular location is the cell inner membrane. The enzyme catalyses UDP-N-acetyl-alpha-D-muramoyl-L-alanyl-gamma-D-glutamyl-meso-2,6-diaminopimeloyl-D-alanyl-D-alanine + di-trans,octa-cis-undecaprenyl phosphate = di-trans,octa-cis-undecaprenyl diphospho-N-acetyl-alpha-D-muramoyl-L-alanyl-D-glutamyl-meso-2,6-diaminopimeloyl-D-alanyl-D-alanine + UMP. Its pathway is cell wall biogenesis; peptidoglycan biosynthesis. Its function is as follows. Catalyzes the initial step of the lipid cycle reactions in the biosynthesis of the cell wall peptidoglycan: transfers peptidoglycan precursor phospho-MurNAc-pentapeptide from UDP-MurNAc-pentapeptide onto the lipid carrier undecaprenyl phosphate, yielding undecaprenyl-pyrophosphoryl-MurNAc-pentapeptide, known as lipid I. The sequence is that of Phospho-N-acetylmuramoyl-pentapeptide-transferase from Xanthomonas campestris pv. campestris (strain 8004).